Consider the following 211-residue polypeptide: Transcription antitermination protein NusB (211 aa).

Belongs to the NusB family.

Functionally, involved in transcription antitermination. Required for transcription of ribosomal RNA (rRNA) genes. Binds specifically to the boxA antiterminator sequence of the ribosomal RNA (rrn) operons. This Trichormus variabilis (strain ATCC 29413 / PCC 7937) (Anabaena variabilis) protein is Transcription antitermination protein NusB.